A 105-amino-acid chain; its full sequence is Signal peptidase complex subunit 1 (105 aa).

Residues 1-32 (MDGMIAMLPAPLQKLSSHIDFQGQKVAERTYQ) are Cytoplasmic-facing. Residues 33–53 (VILTIAGIIGFLVGFWTQQLS) traverse the membrane as a helical segment. At 54–56 (YAM) the chain is on the lumenal side. The helical transmembrane segment at 57–77 (FTVLGASAFTALIILPPWPFL) threads the bilayer. At 78 to 105 (FRKNPIVWHTPAEPQESGDKKKETKKTK) the chain is on the cytoplasmic side.

It belongs to the SPCS1 family. In terms of assembly, component of the signal peptidase complex (SPC) composed of a catalytic subunit sec-11 and three accessory subunits spcs-1, spcs-2 and spcs-3. The complex induces a local thinning of the ER membrane which is used to measure the length of the signal peptide (SP) h-region of protein substrates. This ensures the selectivity of the complex towards h-regions shorter than 18-20 amino acids.

It localises to the endoplasmic reticulum membrane. Functionally, component of the signal peptidase complex (SPC) which catalyzes the cleavage of N-terminal signal sequences from nascent proteins as they are translocated into the lumen of the endoplasmic reticulum. Dispensable for SPC enzymatic activity. The protein is Signal peptidase complex subunit 1 of Caenorhabditis elegans.